A 297-amino-acid chain; its full sequence is NADPH-dependent 1-acyldihydroxyacetone phosphate reductase (297 aa).

Residues 16 to 20 carry the GXSXG motif; it reads GASGG. The Nucleophile; for lipase activity role is filled by S18. Residues I21, D64, N93, R126, Y157, K161, V190, and T192 each contribute to the NADP(+) site. The Proton acceptor role is filled by Y157. The active-site Lowers pKa of active site Tyr is K161.

The protein belongs to the short-chain dehydrogenases/reductases (SDR) family.

The protein localises to the lipid droplet. It localises to the mitochondrion outer membrane. The protein resides in the endoplasmic reticulum. It catalyses the reaction a 1-acylglycerone 3-phosphate + NADPH + H(+) = a 1-acyl-sn-glycero-3-phosphate + NADP(+). The enzyme catalyses 1-hexadecanoyl-sn-glycero-3-phosphate + NADP(+) = 1-hexadecanoylglycerone 3-phosphate + NADPH + H(+). The catalysed reaction is a triacylglycerol + H2O = a diacylglycerol + a fatty acid + H(+). It carries out the reaction 1,2,3-tri-(9Z-octadecenoyl)-glycerol + H2O = di-(9Z)-octadecenoylglycerol + (9Z)-octadecenoate + H(+). Inhibited by divalent cations and N-ethylmaleimide. Activity is reduced under anaerobic growth conditions. In terms of biological role, can convert acyl and alkyl dihydroxyacetone-phosphate (DHAP) into glycerolipids and ether lipids, respectively. Required for the biosynthesis of phosphatidic acid via the DHAP pathway, where it reduces 1-acyl DHAP to lysophosphatidic acid (LPA). Also has triacylglycerol (TAG) lipase activity. Involved in the mobilization of the non-polar storage lipids triacylglycerols (TAGs) from lipid particles by hydrolysis of TAGs. Required for spore germination. Plays a role in cell wall biogenesis, but this effect may be indirect by affecting the activities of cell wall synthesis enzymes. Lipolysis of TAG by AYR1 is essential for starvation-induced autophagy. Forms an NADPH-regulated cation-selective channel in the mitochondrial outer membrane. This chain is NADPH-dependent 1-acyldihydroxyacetone phosphate reductase, found in Saccharomyces cerevisiae (strain ATCC 204508 / S288c) (Baker's yeast).